A 356-amino-acid chain; its full sequence is Malate dehydrogenase, glyoxysomal (356 aa).

Residues methionine 1–cysteine 36 constitute a glyoxysome transit peptide. Residues glycine 51–glycine 57 and aspartate 77 contribute to the NAD(+) site. The substrate site is built by arginine 124 and arginine 130. NAD(+) contacts are provided by residues asparagine 137 and isoleucine 160–asparagine 162. Asparagine 162 and arginine 196 together coordinate substrate. Residue histidine 220 is the Proton acceptor of the active site. An NAD(+)-binding site is contributed by methionine 271.

It belongs to the LDH/MDH superfamily. MDH type 1 family. As to quaternary structure, homodimer.

The protein resides in the glyoxysome. The catalysed reaction is (S)-malate + NAD(+) = oxaloacetate + NADH + H(+). This chain is Malate dehydrogenase, glyoxysomal (MDHG), found in Cucumis sativus (Cucumber).